A 226-amino-acid chain; its full sequence is DnaJ homolog subfamily C member 30, mitochondrial (226 aa).

Residues Met-1–Tyr-38 constitute a mitochondrion transit peptide. The region spanning Ala-49 to Leu-114 is the J domain. A disordered region spans residues Ser-116–Ala-157. A compositionally biased stretch (pro residues) spans Thr-130–Thr-144. The helical transmembrane segment at Asp-208–Tyr-225 threads the bilayer.

Associates with the ATP synthase complex. Interacts with MT-ATP6; interaction is direct. Interacts with ATP5MC2; interaction is direct. As to expression, expressed in brain, heart, kidney, liver, lung, spleen, stomach and testis. Highly expressed in the brain. In the neocortex, expressed in most, if not all, glutamatergic excitatory projection neurons (pyramidal) and many interneurons, with the strongest signal noticeably in large pyramidal neurons of layer 3C. Also present in pyramidal neurons of layer 3C PNs of the superior temporal cortex, as well as in pyramidal neurons (Betz cells) of the layer 5B primary motor cortex (at protein level).

The protein localises to the mitochondrion inner membrane. Functionally, mitochondrial protein enriched in neurons that acts as a regulator of mitochondrial respiration. Associates with the ATP synthase complex and facilitates ATP synthesis. May be a chaperone protein involved in the turnover of the subunits of mitochondrial complex I N-module. It facilitates the degradation of N-module subunits damaged by oxidative stress, and contributes to complex I functional efficiency. In Homo sapiens (Human), this protein is DnaJ homolog subfamily C member 30, mitochondrial.